The chain runs to 113 residues: Crustacean hyperglycemic hormones B (113 aa).

An N-terminal signal peptide occupies residues 1-26 (MVAFRMMSMALLVVVASSWWASPVEA). Intrachain disulfides connect C46-C82, C62-C78, and C65-C91. Residue V111 is modified to Valine amide.

It belongs to the arthropod CHH/MIH/GIH/VIH hormone family. In terms of tissue distribution, expressed at a constant level in the eyestalks of juveniles and mature females. A low level expression is seen in the central nervous system.

It localises to the secreted. Functionally, hormone found in the sinus gland of isopods and decapods which controls the blood sugar level. Has a secretagogue action over the amylase released from the midgut gland. May act as a stress hormone and may be involved in the control of molting and reproduction. In Metapenaeus ensis (Greasyback shrimp), this protein is Crustacean hyperglycemic hormones B.